Reading from the N-terminus, the 88-residue chain is UPF0250 protein Swoo_3713 (88 aa).

The protein belongs to the UPF0250 family.

The protein is UPF0250 protein Swoo_3713 of Shewanella woodyi (strain ATCC 51908 / MS32).